Consider the following 944-residue polypeptide: Leucine--tRNA ligase 2 (944 aa).

The short motif at 36–46 is the 'HIGH' region element; that stretch reads PYPNSPFHLGH. A 'KMSKS' region motif is present at residues 621 to 625; it reads KMSKS. Lys-624 contacts ATP.

This sequence belongs to the class-I aminoacyl-tRNA synthetase family.

It is found in the cytoplasm. The enzyme catalyses tRNA(Leu) + L-leucine + ATP = L-leucyl-tRNA(Leu) + AMP + diphosphate. In Sulfurisphaera tokodaii (strain DSM 16993 / JCM 10545 / NBRC 100140 / 7) (Sulfolobus tokodaii), this protein is Leucine--tRNA ligase 2.